Consider the following 338-residue polypeptide: Lipoate-protein ligase A (338 aa).

Residues 29–216 (PATQRVLFLW…AFFAHYGERV (188 aa)) enclose the BPL/LPL catalytic domain. Residues arginine 71, 76 to 79 (GAVF), and lysine 134 contribute to the ATP site. Lysine 134 is a binding site for (R)-lipoate.

Belongs to the LplA family. In terms of assembly, monomer.

It localises to the cytoplasm. It carries out the reaction L-lysyl-[lipoyl-carrier protein] + (R)-lipoate + ATP = N(6)-[(R)-lipoyl]-L-lysyl-[lipoyl-carrier protein] + AMP + diphosphate + H(+). It functions in the pathway protein modification; protein lipoylation via exogenous pathway; protein N(6)-(lipoyl)lysine from lipoate: step 1/2. The protein operates within protein modification; protein lipoylation via exogenous pathway; protein N(6)-(lipoyl)lysine from lipoate: step 2/2. In terms of biological role, catalyzes both the ATP-dependent activation of exogenously supplied lipoate to lipoyl-AMP and the transfer of the activated lipoyl onto the lipoyl domains of lipoate-dependent enzymes. This chain is Lipoate-protein ligase A, found in Salmonella paratyphi C (strain RKS4594).